Consider the following 25-residue polypeptide: Fructokinase-1 (25 aa).

It belongs to the ROK (NagC/XylR) family. In terms of assembly, homodimer. Mg(2+) serves as cofactor.

The catalysed reaction is D-fructose + ATP = D-fructose 6-phosphate + ADP + H(+). Its activity is regulated as follows. Inhibition by zinc ions (Potential). Inactivated by EDTA. The protein is Fructokinase-1 of Lactococcus lactis subsp. lactis (Streptococcus lactis).